The following is a 547-amino-acid chain: GMP synthase [glutamine-hydrolyzing] (547 aa).

One can recognise a Glutamine amidotransferase type-1 domain in the interval 12-210 (KILILDFGSQ…VLDIAGAKPD (199 aa)). The Nucleophile role is filled by Cys89. Catalysis depends on residues His184 and Glu186. One can recognise a GMPS ATP-PPase domain in the interval 211-403 (WIMRDHIEEA…LGLPAEMVYR (193 aa)). Residue 238–244 (SGGVDSS) participates in ATP binding.

In terms of assembly, homodimer.

It catalyses the reaction XMP + L-glutamine + ATP + H2O = GMP + L-glutamate + AMP + diphosphate + 2 H(+). It participates in purine metabolism; GMP biosynthesis; GMP from XMP (L-Gln route): step 1/1. Its function is as follows. Catalyzes the synthesis of GMP from XMP. The chain is GMP synthase [glutamine-hydrolyzing] from Burkholderia pseudomallei (strain 1710b).